A 166-amino-acid chain; its full sequence is Ribosome maturation factor RimM (166 aa).

Residues 90 to 163 (EGEFLVSQII…TVTIELLEGL (74 aa)) form the PRC barrel domain.

It belongs to the RimM family. Binds ribosomal protein uS19.

It localises to the cytoplasm. Functionally, an accessory protein needed during the final step in the assembly of 30S ribosomal subunit, possibly for assembly of the head region. Essential for efficient processing of 16S rRNA. May be needed both before and after RbfA during the maturation of 16S rRNA. It has affinity for free ribosomal 30S subunits but not for 70S ribosomes. This Oenococcus oeni (strain ATCC BAA-331 / PSU-1) protein is Ribosome maturation factor RimM.